Reading from the N-terminus, the 74-residue chain is ATP synthase subunit 9, mitochondrial (74 aa).

Helical transmembrane passes span 16–36 (GLIG…LGVA) and 50–70 (ILGF…AFLL).

This sequence belongs to the ATPase C chain family. As to quaternary structure, F-type ATPases have 2 components, CF(1) - the catalytic core - and CF(0) - the membrane proton channel. CF(1) has five subunits: alpha(3), beta(3), gamma(1), delta(1), epsilon(1). CF(0) has three main subunits: a, b and c.

Its subcellular location is the mitochondrion membrane. Its function is as follows. Mitochondrial membrane ATP synthase (F(1)F(0) ATP synthase or Complex V) produces ATP from ADP in the presence of a proton gradient across the membrane which is generated by electron transport complexes of the respiratory chain. F-type ATPases consist of two structural domains, F(1) - containing the extramembraneous catalytic core and F(0) - containing the membrane proton channel, linked together by a central stalk and a peripheral stalk. During catalysis, ATP synthesis in the catalytic domain of F(1) is coupled via a rotary mechanism of the central stalk subunits to proton translocation. Part of the complex F(0) domain. A homomeric c-ring of probably 10 subunits is part of the complex rotary element. This chain is ATP synthase subunit 9, mitochondrial (ATP9), found in Trichophyton rubrum (Athlete's foot fungus).